A 321-amino-acid chain; its full sequence is Glucokinase (321 aa).

An ATP-binding site is contributed by 8 to 13 (GDVGGT).

Belongs to the bacterial glucokinase family.

The protein localises to the cytoplasm. The catalysed reaction is D-glucose + ATP = D-glucose 6-phosphate + ADP + H(+). The sequence is that of Glucokinase from Erwinia tasmaniensis (strain DSM 17950 / CFBP 7177 / CIP 109463 / NCPPB 4357 / Et1/99).